A 316-amino-acid polypeptide reads, in one-letter code: Serine protease 45 (316 aa).

The N-terminal stretch at 1-38 is a signal peptide; the sequence is MAASLSRLSAGLAASRPLGLSRSFLLLVLLLLNSGYKG. The 242-residue stretch at 49–290 folds into the Peptidase S1 domain; it reads WWPKNLDLSR…YSRWIKKQIS (242 aa). Cys-74 and Cys-90 are oxidised to a cystine. Catalysis depends on His-89, which acts as the Charge relay system. N-linked (GlcNAc...) asparagine glycosylation occurs at Asn-110. The active-site Charge relay system is the Asp-137. N-linked (GlcNAc...) asparagine glycosylation is found at Asn-162 and Asn-186. 3 disulfide bridges follow: Cys-171-Cys-248, Cys-206-Cys-229, and Cys-238-Cys-266. Ser-242 functions as the Charge relay system in the catalytic mechanism.

The protein belongs to the peptidase S1 family.

It localises to the secreted. The protein is Serine protease 45 (PRSS45) of Bos taurus (Bovine).